The chain runs to 716 residues: Astellifadiene synthase (716 aa).

The segment at 1-323 is terpene cyclase; the sequence is MEFKYSTLID…SPRYYTDAKF (323 aa). Asp92 contacts Mg(2+). Substrate-binding positions include Asp92, 179-182, Asn223, 227-231, and 316-317; these read RIYD, SWEKE, and RY. Positions 92–96 match the DDXXD 1 motif; it reads DDVID. An NSE/DTE motif is present at residues 223-231; that stretch reads NDLVSWEKE. Positions 324–713 are prenyltransferase; the sequence is SQRQLDWIKN…FQLKLILQFL (390 aa). Positions 436, 439, and 468 each coordinate isopentenyl diphosphate. Mg(2+)-binding residues include Asp475 and Asp479. Positions 475-479 match the DDXXD 2 motif; that stretch reads DDVED. Arg484 is a binding site for dimethylallyl diphosphate. Isopentenyl diphosphate is bound at residue Arg485. Positions 562, 563, 598, 605, 615, and 625 each coordinate dimethylallyl diphosphate.

It in the N-terminal section; belongs to the terpene synthase family. In the C-terminal section; belongs to the FPP/GGPP synthase family. As to quaternary structure, hexamer. It depends on Mg(2+) as a cofactor.

It catalyses the reaction isopentenyl diphosphate + (2E,6E)-farnesyl diphosphate = (2E,6E,10E)-geranylgeranyl diphosphate + diphosphate. It carries out the reaction isopentenyl diphosphate + (2E,6E,10E)-geranylgeranyl diphosphate = (2E,6E,10E,14E)-geranylfarnesyl diphosphate + diphosphate. The catalysed reaction is (2E,6E,10E,14E)-geranylfarnesyl diphosphate = astellifadiene + diphosphate. It participates in secondary metabolite biosynthesis; terpenoid biosynthesis. Its function is as follows. Bifunctional terpene synthase that converts dimethylallyl diphosphate (DMAPP) and isopentenyl diphosphate (IPP) into astellifadiene. The C-terminal prenyltransferase (PT) domain of EvAS catalyzes formation of geranylfarnesyl pyrophosphate (GFPP), whereas the N-terminal terpene cyclase (TC) domain catalyzes the cyclization of GFPP to astellifadiene. The sequence is that of Astellifadiene synthase from Emericella variicolor (Aspergillus stellatus).